Here is a 185-residue protein sequence, read N- to C-terminus: 4-nitrophenol 4-monooxygenase/4-nitrocatechol 2-monooxygenase, reductase component (185 aa).

This sequence belongs to the non-flavoprotein flavin reductase family. As to quaternary structure, the 4-NP/4-NCA monooxygenase is composed of an oxygenase component NpcA and a reductase component NpcB.

It carries out the reaction 4-nitrophenol + NADH + O2 + H(+) = 4-nitrocatechol + NAD(+) + H2O. The catalysed reaction is 4-nitrocatechol + NADPH + O2 = 2-hydroxy-1,4-benzoquinone + nitrite + NADP(+) + H2O. It catalyses the reaction 4-nitrocatechol + NADH + O2 = 2-hydroxy-1,4-benzoquinone + nitrite + NAD(+) + H2O. It participates in aromatic compound metabolism. It functions in the pathway xenobiotic degradation. Inhibited by methimazole. In terms of biological role, involved in the degradation of para-nitrophenol (4-NP). Catalyzes both the initial hydroxylation of 4-NP to produce 4-nitrocatechol (4-NCA) and the subsequent oxidative release of the nitro group from 4-NCA to produce 2-hydroxy-1,4-benzoquinone. It can also use 4-nitroresorcinol as substrate with a rate of nitrite release similar to that observed with the two physiological substrates, 4-PN and 4-NCA. The polypeptide is 4-nitrophenol 4-monooxygenase/4-nitrocatechol 2-monooxygenase, reductase component (npcB) (Rhodococcus opacus (Nocardia opaca)).